The primary structure comprises 188 residues: MAASLAVEKKKLKNPPLQLHYLGDRVLRQPAKRVSKVDDSIRDIARKMLQTMYSADGIGLAAPQVGINKQILVIDIHPDDPEAEPLVMINPVIKDFSEELEVCQEGCLSIPGVYLEVRRPAMVEVSYKDEWGRPQVIMAGGLLARAIQHEIDHLTGVMFVDRVENQALLRHELKEHGFTASAVRPIAA.

The Fe cation site is built by cysteine 107 and histidine 149. Glutamate 150 is a catalytic residue. Histidine 153 serves as a coordination point for Fe cation.

This sequence belongs to the polypeptide deformylase family. Fe(2+) is required as a cofactor.

The catalysed reaction is N-terminal N-formyl-L-methionyl-[peptide] + H2O = N-terminal L-methionyl-[peptide] + formate. Removes the formyl group from the N-terminal Met of newly synthesized proteins. Requires at least a dipeptide for an efficient rate of reaction. N-terminal L-methionine is a prerequisite for activity but the enzyme has broad specificity at other positions. This Thermosynechococcus vestitus (strain NIES-2133 / IAM M-273 / BP-1) protein is Peptide deformylase.